Reading from the N-terminus, the 185-residue chain is Ribosome-recycling factor (185 aa).

Belongs to the RRF family.

Its subcellular location is the cytoplasm. In terms of biological role, responsible for the release of ribosomes from messenger RNA at the termination of protein biosynthesis. May increase the efficiency of translation by recycling ribosomes from one round of translation to another. The sequence is that of Ribosome-recycling factor from Aliarcobacter butzleri (strain RM4018) (Arcobacter butzleri).